A 24-amino-acid polypeptide reads, in one-letter code: Bombinin (24 aa).

Asn-24 carries the post-translational modification Asparagine amide.

Belongs to the bombinin family. In terms of tissue distribution, expressed by the skin glands.

The protein resides in the secreted. Functionally, has antimicrobial and hemolytic activities. The polypeptide is Bombinin (Bombina variegata (Yellow-bellied toad)).